We begin with the raw amino-acid sequence, 460 residues long: MMLEGYTVQPPQSTLIGDIEIQDENANQEVKNVLYQGVQKGIKRLEKRQRRVALGDVTSQKANKIHNAIHNKFHQTKNNFEIENIRSSALVKEQQRDVRHEDSDYFLIDSSEGSSTDDEQVNEDAIDDLLSRRVNDQQIQADEVYEDFDGEMQDVIEEDVDSQIEPLSPINNDEIQTELDRAFEKYFRSVPNPLDDDTHDVVMVVEYASDIFYYLRELEVKYRPNPYYMQNQVELTWPFRRTMIDWLVQLHFRFQLLPETLYLTINIVDRFLSKKTVTLNRFQLVGVSALFIAAKFEEINCPTLDDLVYMLENTYTRDDIIRAEQYMIDTLEFEIGWPGPMPFLRRISKADDYDFEPRTLAKYLLETTIVEPKLVAAAPSWLAAGAYFLSRTILGSNDWSLKHVFYSGYTSSQIIPLASLILENCKNASRRHHSIWKKYFDQKHYRCSQIVEEWIVSTEA.

The protein belongs to the cyclin family. Cyclin AB subfamily.

Functionally, essential for the control of the cell cycle at the G2/M (mitosis) transition. Interacts with the CDC2 protein kinase to form MPF. G2/M cyclins accumulate steadily during G2 and are abruptly destroyed at mitosis. The sequence is that of G2/mitotic-specific cyclin-4 (CLB4) from Saccharomyces cerevisiae (strain ATCC 204508 / S288c) (Baker's yeast).